Reading from the N-terminus, the 328-residue chain is D-cysteine desulfhydrase (328 aa).

Position 51 is an N6-(pyridoxal phosphate)lysine (Lys51).

Belongs to the ACC deaminase/D-cysteine desulfhydrase family. Homodimer. It depends on pyridoxal 5'-phosphate as a cofactor.

The catalysed reaction is D-cysteine + H2O = hydrogen sulfide + pyruvate + NH4(+) + H(+). Catalyzes the alpha,beta-elimination reaction of D-cysteine and of several D-cysteine derivatives. It could be a defense mechanism against D-cysteine. The sequence is that of D-cysteine desulfhydrase from Klebsiella pneumoniae (strain 342).